Here is a 256-residue protein sequence, read N- to C-terminus: Probable galactose dehydrogenase GalD (256 aa).

NAD(+)-binding positions include 20–23 (GGGS), 71–72 (DL), and Asn-98. Ser-150 is a binding site for substrate. The Proton acceptor role is filled by Tyr-163. NAD(+) is bound by residues 163 to 167 (YSTAK) and Ile-196.

Belongs to the short-chain dehydrogenases/reductases (SDR) family.

Functionally, involved in the degradation of galactose via the DeLey-Doudoroff pathway. Catalyzes the oxidation of galactose in the presence of NAD(+). Uses NAD(+) as a hydrogen acceptor more efficiently than NADP(+). This is Probable galactose dehydrogenase GalD (galD) from Rhizobium meliloti (strain 1021) (Ensifer meliloti).